Reading from the N-terminus, the 396-residue chain is MFSQAQFNVTMAEEDRWKQWYPNMEMIVNNKGPKLIFPELNFNITGLEEKSRYVVLLSIEKYDNIRYGYRNGKWGPSKVRHATKKEQEIKYFLHPDGTKLGKELMKETIKFDTVRITNHKKFMDKDNVFFVETMHKYVPVLTVKNITNVESANHSMRMEVAQFFPVTVYNQESIGNWKSKFHKNSTYGNRLDGGNKRKNTDSSEERTSKRSKNETEIAVSDILQVASQSENYNESTNSGRLQNEISSSIHQFPSTSYQNQYPHAYPTVNTPPIYVQQFTALFDEIHNQFDPKTKQNRVAKNVQYLSSVPQFAINQKENIHQNAPDYPVSQFPNQYPYGSYPYYYPYFQSSQQFPHLNYSMNNSIYSDSSFQSSFSAENSYFDENGNPIHYPYYSSN.

Positions 11-192 (MAEEDRWKQW…KNSTYGNRLD (182 aa)) form a DNA-binding region, T-box. A disordered region spans residues 185–215 (STYGNRLDGGNKRKNTDSSEERTSKRSKNET). Positions 193 to 215 (GGNKRKNTDSSEERTSKRSKNET) are enriched in basic and acidic residues.

The protein localises to the nucleus. This Caenorhabditis elegans protein is Putative T-box protein 39 (tbx-39).